Reading from the N-terminus, the 629-residue chain is 1-deoxy-D-xylulose-5-phosphate synthase (629 aa).

Thiamine diphosphate contacts are provided by residues His-73 and 114–116 (GHA). Asp-145 is a Mg(2+) binding site. Residues 146-147 (GA), Asn-174, Tyr-284, and Glu-360 each bind thiamine diphosphate. Residue Asn-174 coordinates Mg(2+).

This sequence belongs to the transketolase family. DXPS subfamily. In terms of assembly, homodimer. Mg(2+) is required as a cofactor. The cofactor is thiamine diphosphate.

The catalysed reaction is D-glyceraldehyde 3-phosphate + pyruvate + H(+) = 1-deoxy-D-xylulose 5-phosphate + CO2. The protein operates within metabolic intermediate biosynthesis; 1-deoxy-D-xylulose 5-phosphate biosynthesis; 1-deoxy-D-xylulose 5-phosphate from D-glyceraldehyde 3-phosphate and pyruvate: step 1/1. Its function is as follows. Catalyzes the acyloin condensation reaction between C atoms 2 and 3 of pyruvate and glyceraldehyde 3-phosphate to yield 1-deoxy-D-xylulose-5-phosphate (DXP). In Thermomicrobium roseum (strain ATCC 27502 / DSM 5159 / P-2), this protein is 1-deoxy-D-xylulose-5-phosphate synthase.